Reading from the N-terminus, the 294-residue chain is Bifunctional protein FolD (294 aa).

Residues 164 to 166, S193, and I234 each bind NADP(+); that span reads GRS.

The protein belongs to the tetrahydrofolate dehydrogenase/cyclohydrolase family. Homodimer.

It carries out the reaction (6R)-5,10-methylene-5,6,7,8-tetrahydrofolate + NADP(+) = (6R)-5,10-methenyltetrahydrofolate + NADPH. It catalyses the reaction (6R)-5,10-methenyltetrahydrofolate + H2O = (6R)-10-formyltetrahydrofolate + H(+). It functions in the pathway one-carbon metabolism; tetrahydrofolate interconversion. Functionally, catalyzes the oxidation of 5,10-methylenetetrahydrofolate to 5,10-methenyltetrahydrofolate and then the hydrolysis of 5,10-methenyltetrahydrofolate to 10-formyltetrahydrofolate. This is Bifunctional protein FolD from Flavobacterium psychrophilum (strain ATCC 49511 / DSM 21280 / CIP 103535 / JIP02/86).